The following is a 915-amino-acid chain: Isoleucine--tRNA ligase (915 aa).

Positions 58–68 (PYANGHLHIGH) match the 'HIGH' region motif. E568 is an L-isoleucyl-5'-AMP binding site. A 'KMSKS' region motif is present at residues 609–613 (KMSKS). K612 contacts ATP. Residues C892, C895, C907, and C910 each contribute to the Zn(2+) site.

Belongs to the class-I aminoacyl-tRNA synthetase family. IleS type 1 subfamily. Monomer. It depends on Zn(2+) as a cofactor.

It is found in the cytoplasm. The catalysed reaction is tRNA(Ile) + L-isoleucine + ATP = L-isoleucyl-tRNA(Ile) + AMP + diphosphate. Its function is as follows. Catalyzes the attachment of isoleucine to tRNA(Ile). As IleRS can inadvertently accommodate and process structurally similar amino acids such as valine, to avoid such errors it has two additional distinct tRNA(Ile)-dependent editing activities. One activity is designated as 'pretransfer' editing and involves the hydrolysis of activated Val-AMP. The other activity is designated 'posttransfer' editing and involves deacylation of mischarged Val-tRNA(Ile). The protein is Isoleucine--tRNA ligase of Wolinella succinogenes (strain ATCC 29543 / DSM 1740 / CCUG 13145 / JCM 31913 / LMG 7466 / NCTC 11488 / FDC 602W) (Vibrio succinogenes).